We begin with the raw amino-acid sequence, 33 residues long: Omega-conotoxin-like Vn2 (33 aa).

3 disulfide bridges follow: Cys3-Cys20, Cys10-Cys24, and Cys19-Cys28. The residue at position 33 (Pro33) is a Proline amide.

Expressed by the venom duct.

Its subcellular location is the secreted. Omega-conotoxins act at presynaptic membranes, they bind and block voltage-gated calcium channels (Cav). Has strong insecticidal properties at a dose of only 100 pmol/g of body weight (when injected into the haemocoel of the wax moth G.mellonella larvae). Provoques tremor and uncontrolled movements in insect larvae, that are typical symptoms caused by neurotoxins. On fish G.niger, intraperitoneal injection of the toxin causes full extension of the fins, change in posture, breathing difficulties (at 30 and 100 pmol/g body weight) and death (at 100 pmol/g body weight). This is Omega-conotoxin-like Vn2 from Conus ventricosus (Mediterranean cone).